The following is a 115-amino-acid chain: MLDVKSQDISIPEAVVVLCTAPDEATAQDLAAKVLAEKLAACATLLPGATSLYYWEGKLEQEYEVQMILKTTVSHQQALIDCLKSHHPYQTPELLVLPVTHGDTDYLSWLNASLR.

3 residues coordinate Cu cation: cysteine 19, histidine 86, and histidine 87.

This sequence belongs to the CutA family. As to quaternary structure, homotrimer. It depends on Cu cation as a cofactor.

The protein resides in the cytoplasm. Functionally, involved in resistance toward heavy metals. This Salmonella agona (strain SL483) protein is Divalent-cation tolerance protein CutA.